The following is an 87-amino-acid chain: Small ribosomal subunit protein bS20 (87 aa).

Over residues 1 to 19 (MANHKSALKRHRQSIKRNL) the composition is skewed to basic residues. The segment at 1–22 (MANHKSALKRHRQSIKRNLRNN) is disordered.

This sequence belongs to the bacterial ribosomal protein bS20 family.

Its function is as follows. Binds directly to 16S ribosomal RNA. The sequence is that of Small ribosomal subunit protein bS20 from Maridesulfovibrio salexigens (strain ATCC 14822 / DSM 2638 / NCIMB 8403 / VKM B-1763) (Desulfovibrio salexigens).